The following is a 405-amino-acid chain: Argininosuccinate synthase (405 aa).

ATP contacts are provided by residues 10–18 (AYSGGLDTS) and Ala37. Residues Tyr88 and Ser93 each coordinate L-citrulline. Residue Gly118 coordinates ATP. 3 residues coordinate L-aspartate: Thr120, Asn124, and Asp125. Position 124 (Asn124) interacts with L-citrulline. L-citrulline contacts are provided by Arg128, Ser179, Ser188, Glu264, and Tyr276.

This sequence belongs to the argininosuccinate synthase family. Type 1 subfamily. In terms of assembly, homotetramer.

The protein localises to the cytoplasm. It catalyses the reaction L-citrulline + L-aspartate + ATP = 2-(N(omega)-L-arginino)succinate + AMP + diphosphate + H(+). The protein operates within amino-acid biosynthesis; L-arginine biosynthesis; L-arginine from L-ornithine and carbamoyl phosphate: step 2/3. The protein is Argininosuccinate synthase of Pseudomonas entomophila (strain L48).